Reading from the N-terminus, the 200-residue chain is Imidazole glycerol phosphate synthase subunit HisH (200 aa).

Residues 3 to 200 form the Glutamine amidotransferase type-1 domain; sequence DLALIDAGGA…LRNFLEMSFP (198 aa). C78 serves as the catalytic Nucleophile. Active-site residues include H179 and E181.

Heterodimer of HisH and HisF.

Its subcellular location is the cytoplasm. The catalysed reaction is 5-[(5-phospho-1-deoxy-D-ribulos-1-ylimino)methylamino]-1-(5-phospho-beta-D-ribosyl)imidazole-4-carboxamide + L-glutamine = D-erythro-1-(imidazol-4-yl)glycerol 3-phosphate + 5-amino-1-(5-phospho-beta-D-ribosyl)imidazole-4-carboxamide + L-glutamate + H(+). It catalyses the reaction L-glutamine + H2O = L-glutamate + NH4(+). It participates in amino-acid biosynthesis; L-histidine biosynthesis; L-histidine from 5-phospho-alpha-D-ribose 1-diphosphate: step 5/9. Its function is as follows. IGPS catalyzes the conversion of PRFAR and glutamine to IGP, AICAR and glutamate. The HisH subunit catalyzes the hydrolysis of glutamine to glutamate and ammonia as part of the synthesis of IGP and AICAR. The resulting ammonia molecule is channeled to the active site of HisF. The chain is Imidazole glycerol phosphate synthase subunit HisH from Xanthomonas campestris pv. campestris (strain 8004).